Consider the following 254-residue polypeptide: RNA polymerase sigma factor SigI8 (254 aa).

The short motif at 61 to 74 is the Polymerase core binding element; that stretch reads DEYSIALIAFNEAI. The segment at residues 209 to 228 is a DNA-binding region (H-T-H motif); the sequence is YKELTERFNLCRRTLEKNRK.

The protein belongs to the sigma-70 factor family. SigI subfamily. As to quaternary structure, interacts with RsgI8.

Its subcellular location is the cytoplasm. With respect to regulation, negatively regulated by the anti-sigma-I factor RsgI8. Its function is as follows. Sigma factors are initiation factors that promote the attachment of RNA polymerase to specific initiation sites and are then released. The sequence is that of RNA polymerase sigma factor SigI8 from Acetivibrio thermocellus (strain ATCC 27405 / DSM 1237 / JCM 9322 / NBRC 103400 / NCIMB 10682 / NRRL B-4536 / VPI 7372) (Clostridium thermocellum).